The chain runs to 49 residues: Large ribosomal subunit protein bL33 (49 aa).

Belongs to the bacterial ribosomal protein bL33 family.

The polypeptide is Large ribosomal subunit protein bL33 (Clostridium botulinum (strain Alaska E43 / Type E3)).